We begin with the raw amino-acid sequence, 338 residues long: Tripartite motif-containing protein 44 (338 aa).

2 disordered regions span residues 1–25 (MASGGGAAFEELPHDGTCDECEPDE) and 72–162 (ARGD…EFDP). Residues 95–162 (EAGEGIESEE…ETEAESEFDP (68 aa)) are compositionally biased toward acidic residues. Residues 109-153 (EEESETEEESEDESEEDSEEEMEDEQESEAEEDNQEEGESEAEGE) are a coiled coil. The B box-type zinc-finger motif lies at 171–212 (VAKRKCPDHGLDLSTYCQEDKQLICVLCPVIGAHHGHHLSTL). Zn(2+) is bound by residues C176, H179, C198, and H204. Residues 257-322 (QQEFKKVQKV…QLDTSNESAE (66 aa)) are a coiled coil. The tract at residues 307-338 (MAQAKEQLDTSNESAEPKAEGDEEEPGGTDED) is disordered. Residues 327-338 (GDEEEPGGTDED) show a composition bias toward acidic residues.

In terms of assembly, interacts (via coiled coil) with TRIM17 (via coiled coil).

In terms of biological role, may play a role in the process of differentiation and maturation of neuronal cells. May regulate the activity of TRIM17. Is a negative regulator of PAX6 expression. This is Tripartite motif-containing protein 44 (TRIM44) from Bos taurus (Bovine).